We begin with the raw amino-acid sequence, 512 residues long: Ribonuclease Y (512 aa).

A helical transmembrane segment spans residues 2 to 22; the sequence is VGMYIIIPIVTFIIGGLLAWL. The KH domain occupies 202–262; the sequence is SITVFHIESD…VRREIARLAL (61 aa). The HD domain occupies 328 to 421; that stretch reads LLQHARETAN…VQVCDAISGA (94 aa).

This sequence belongs to the RNase Y family.

The protein localises to the cell membrane. In terms of biological role, endoribonuclease that initiates mRNA decay. In Parabacteroides distasonis (strain ATCC 8503 / DSM 20701 / CIP 104284 / JCM 5825 / NCTC 11152), this protein is Ribonuclease Y.